We begin with the raw amino-acid sequence, 874 residues long: Bifunctional apolipoprotein N-acyltransferase/polyprenol monophosphomannose synthase (874 aa).

The apolipoprotein N-acyltransferase stretch occupies residues 1 to 593 (MKLGAWVAAQ…GRHRATSRSY (593 aa)). A run of 5 helical transmembrane segments spans residues 23 to 42 (TRLV…FPPR), 72 to 89 (YGLL…PWIG), 94 to 115 (PGPW…GLFA), 177 to 194 (VALV…IEKW), and 206 to 223 (AVVL…AAIV). In terms of domain architecture, CN hydrolase spans 241–497 (VTVAVVQGNV…PAYLDSQVRL (257 aa)). The active-site Proton acceptor is glutamate 294. Lysine 359 is a catalytic residue. Catalysis depends on cysteine 409, which acts as the Nucleophile. A helical transmembrane segment spans residues 509–526 (PILQWILVGAAAAVVLVA). Disordered regions lie at residues 533–609 (FPRP…NRPS) and 852–874 (RARP…DVTE). The polyprenol monophosphomannose synthase stretch occupies residues 594–874 (MTTGQPAPPA…SRVSRADVTE (281 aa)).

The protein in the N-terminal section; belongs to the CN hydrolase family. Apolipoprotein N-acyltransferase subfamily. It in the C-terminal section; belongs to the glycosyltransferase 2 family.

The protein resides in the cell membrane. The enzyme catalyses N-terminal S-1,2-diacyl-sn-glyceryl-L-cysteinyl-[lipoprotein] + a glycerophospholipid = N-acyl-S-1,2-diacyl-sn-glyceryl-L-cysteinyl-[lipoprotein] + a 2-acyl-sn-glycero-3-phospholipid + H(+). The catalysed reaction is a di-trans,poly-cis-dolichyl phosphate + GDP-alpha-D-mannose = a di-trans,poly-cis-dolichyl beta-D-mannosyl phosphate + GDP. The protein operates within protein modification; lipoprotein biosynthesis (N-acyl transfer). Catalyzes the phospholipid dependent N-acylation of the N-terminal cysteine of apolipoprotein, the last step in lipoprotein maturation. Its function is as follows. Transfers mannose from GDP-mannose to lipid acceptors to form polyprenol monophosphomannose (PPM). PMM is an alkai-stable sugar donor which adds mannose-phosphate residues to triacylated-phosphatidyl-myo-inositol mannosides (PIM2), eventually leading to generation of the cell wall glycolipid lipoglycan modulins lipoarabinomannan (LAM) and lipomannan (LM). This Mycobacterium bovis (strain BCG / Pasteur 1173P2) protein is Bifunctional apolipoprotein N-acyltransferase/polyprenol monophosphomannose synthase.